The chain runs to 895 residues: Protein translocase subunit SecA (895 aa).

ATP is bound by residues glutamine 90, 108–112 (GEGKS), and aspartate 498.

This sequence belongs to the SecA family.

The protein localises to the plastid. It localises to the chloroplast stroma. The protein resides in the chloroplast thylakoid membrane. The enzyme catalyses ATP + H2O + cellular proteinSide 1 = ADP + phosphate + cellular proteinSide 2.. Functionally, has a central role in coupling the hydrolysis of ATP to the transfer of proteins across the thylakoid membrane. The sequence is that of Protein translocase subunit SecA from Cyanidium caldarium (Red alga).